Consider the following 191-residue polypeptide: uncharacterized protein (191 aa).

Residues 1-22 (MKSLRLMLCAMPLMLTGCSTMS) form the signal peptide.

This is an uncharacterized protein from Escherichia coli (strain K12).